Here is a 1047-residue protein sequence, read N- to C-terminus: Exportin-6 (1047 aa).

Residues 32–98 (IDTILNNYKA…KGLLLDIYLN (67 aa)) form the Importin N-terminal domain.

This sequence belongs to the exportin family.

The protein resides in the nucleus. The protein localises to the cytoplasm. Probably mediates the nuclear export of actin and profilin-actin complexes. This chain is Exportin-6 (xpo6), found in Dictyostelium discoideum (Social amoeba).